A 513-amino-acid polypeptide reads, in one-letter code: Maturase K (513 aa).

This sequence belongs to the intron maturase 2 family. MatK subfamily.

The protein resides in the plastid. Its subcellular location is the chloroplast. In terms of biological role, usually encoded in the trnK tRNA gene intron. Probably assists in splicing its own and other chloroplast group II introns. The polypeptide is Maturase K (Arundo donax (Giant reed)).